We begin with the raw amino-acid sequence, 967 residues long: Isoleucine--tRNA ligase 2 (967 aa).

Positions 58 to 68 (PYANGDIHIGH) match the 'HIGH' region motif. Residues 430–463 (EADPGRADVTEEAGATGEARKVGKAEEAEEAGPV) form a disordered region. Residue Glu598 participates in L-isoleucyl-5'-AMP binding. The 'KMSKS' region motif lies at 639–643 (KMSKS). Position 642 (Lys642) interacts with ATP. Zn(2+)-binding residues include Cys922, Cys925, Cys942, and Cys945.

Belongs to the class-I aminoacyl-tRNA synthetase family. IleS type 1 subfamily. Monomer. The cofactor is Zn(2+).

It is found in the cytoplasm. The enzyme catalyses tRNA(Ile) + L-isoleucine + ATP = L-isoleucyl-tRNA(Ile) + AMP + diphosphate. In terms of biological role, catalyzes the attachment of isoleucine to tRNA(Ile). As IleRS can inadvertently accommodate and process structurally similar amino acids such as valine, to avoid such errors it has two additional distinct tRNA(Ile)-dependent editing activities. One activity is designated as 'pretransfer' editing and involves the hydrolysis of activated Val-AMP. The other activity is designated 'posttransfer' editing and involves deacylation of mischarged Val-tRNA(Ile). This chain is Isoleucine--tRNA ligase 2, found in Burkholderia pseudomallei (strain K96243).